A 341-amino-acid chain; its full sequence is MESQIQQLQQEIDEYQIRNAGELEAFKLEFTVRKGKIAGLFGQLKTVDSADRPRIGQLLNALKQAAEKKIEEAESCFAQKADADAPSIDLSLPGRRSFCGSEHPAQKVLGDMKRIFTAMGFSIATGPELELDEYNFDRLNFPPNHPARDMQDTFFITRGQPDGDVLLRTHTSPVQVRVMLDEKPPIRVICPGKVYRNEAISARSYCVFHQLEGLYIDKNVSFADLKATIYSFARQMFGSDVKLRFRPSFFPFTEPSAEVDVTCYLCGGKGCRVCKKSGWLEIMGCGMVHPNVMKNCGIDPEEWTGYAFGMGVDRTALLRYKIDDIRLLFENDVRMLSQFTA.

Mg(2+) is bound at residue glutamate 254.

This sequence belongs to the class-II aminoacyl-tRNA synthetase family. Phe-tRNA synthetase alpha subunit type 1 subfamily. In terms of assembly, tetramer of two alpha and two beta subunits. Mg(2+) serves as cofactor.

The protein localises to the cytoplasm. The enzyme catalyses tRNA(Phe) + L-phenylalanine + ATP = L-phenylalanyl-tRNA(Phe) + AMP + diphosphate + H(+). The protein is Phenylalanine--tRNA ligase alpha subunit of Chlorobaculum parvum (strain DSM 263 / NCIMB 8327) (Chlorobium vibrioforme subsp. thiosulfatophilum).